We begin with the raw amino-acid sequence, 520 residues long: Interferon lambda receptor 1 (520 aa).

An N-terminal signal peptide occupies residues 1–20; that stretch reads MAGPERWGPLLLCLLQAAPG. Over 21–228 the chain is Extracellular; that stretch reads RPRLAPPQNV…LLEVPEANWA (208 aa). One can recognise a Fibronectin type-III domain in the interval 26-126; that stretch reads PPQNVTLLSQ…LDYLFEVEPA (101 aa). Residues asparagine 29 and asparagine 36 are each glycosylated (N-linked (GlcNAc...) asparagine). Cystine bridges form between cysteine 74/cysteine 82 and cysteine 86/cysteine 150. Residues asparagine 142 and asparagine 169 are each glycosylated (N-linked (GlcNAc...) asparagine). Residues cysteine 195 and cysteine 217 are joined by a disulfide bond. A helical membrane pass occupies residues 229–249; the sequence is FLVLPSLLILLLVIAAGGVIW. Residues 250–520 are Cytoplasmic-facing; that stretch reads KTLMGNPWFQ…GRTLGHYMAR (271 aa). Disordered stretches follow at residues 302–439 and 477–520; these read VRPT…FLEE and ESSP…YMAR. Positions 323–336 are enriched in acidic residues; sequence AEDEEEEDEEDTED. Residues 380–392 are compositionally biased toward low complexity; the sequence is SSAWDSSDRSWAS. Over residues 479-495 the composition is skewed to acidic residues; it reads SPEEEEEARESEIEDSD.

The protein belongs to the type II cytokine receptor family. In terms of assembly, heterodimer with IL10RB. Ubiquitinated by FBXO45-containing E3 ligase leading to proteasomal degradation. In terms of tissue distribution, widely expressed.

It localises to the membrane. Functionally, the IFNLR1/IL10RB dimer is a receptor for the cytokine ligands IFNL2 and IFNL3 and mediates their antiviral activity. The ligand/receptor complex stimulate the activation of the JAK/STAT signaling pathway leading to the expression of IFN-stimulated genes (ISG), which contribute to the antiviral state. Determines the cell type specificity of the lambda interferon action. Shows a more restricted pattern of expression in the epithelial tissues thereby limiting responses to lambda interferons primarily to epithelial cells of the respiratory, gastrointestinal, and reproductive tracts. Seems not to be essential for early virus-activated host defense in vaginal infection, but plays an important role in Toll-like receptor (TLR)-induced antiviral defense. Plays a significant role in the antiviral immune defense in the intestinal epithelium. In Homo sapiens (Human), this protein is Interferon lambda receptor 1 (IFNLR1).